A 716-amino-acid polypeptide reads, in one-letter code: Protein C-mannosyl-transferase DPY19L3 (716 aa).

Residues 1–43 lie on the Cytoplasmic side of the membrane; the sequence is MMSIRQRREIRATEVSEDFPAQEENVKLENKLPSGCTSRRLWK. Residues 44-64 form a helical membrane-spanning segment; sequence ILSLTIGGTIALCIGLLTSVY. At 65–154 the chain is on the lumenal side; that stretch reads LATLHENDLW…RVLPIQKYLE (90 aa). A glycan (N-linked (GlcNAc...) asparagine) is linked at Asn118. Residues 155-182 traverse the membrane as a helical segment; it reads PVYFYIYTLFGLQAIYVTALYITSWLLS. At 183–184 the chain is on the cytoplasmic side; sequence GT. The name=3 intramembrane region spans 185-197; it reads WLSGLLAAFWYVT. Topologically, residues 198–215 are cytoplasmic; the sequence is NRIDTTRVEFTIPLRENW. Positions 216 to 230 form an intramembrane region, name=4; the sequence is ALPFFAIQIAAITYF. Topologically, residues 231 to 239 are cytoplasmic; that stretch reads LRPNLQPLS. Residues 240-256 traverse the membrane as a helical segment; the sequence is ERLTLLAIFISTFLFSL. At 257–262 the chain is on the lumenal side; the sequence is TWQFNQ. A helical transmembrane segment spans residues 263 to 279; that stretch reads FMMLMQALVLFTLDSLD. The Cytoplasmic segment spans residues 280–289; that stretch reads MLPAVKATWL. Residues 290–306 traverse the membrane as a helical segment; the sequence is YGIQITSLLLVCILQFF. Residues 307–308 are Lumenal-facing; that stretch reads NS. Residues 309-323 form a helical membrane-spanning segment; the sequence is MILGSLLISFNLSVF. Topologically, residues 324–338 are cytoplasmic; it reads IARKLQKNLKTGSFL. A helical membrane pass occupies residues 339–359; that stretch reads NRLGKLLLHLFMVLCLTLFLN. Topologically, residues 360 to 414 are lumenal; the sequence is NIIKKILNLKSDEHIFKFLKAKFGLGATRDFDANLYLCEEAFGLLPFNTFGRLSD. A helical transmembrane segment spans residues 415-437; that stretch reads TLLFYAYIFVLSITVIVAFVVAF. Topologically, residues 438-465 are cytoplasmic; that stretch reads HNLSDSTNQQSVGKMEKGTVDLKPETAY. The helical transmembrane segment at 466–485 threads the bilayer; it reads NLIHTILFGFLALSTMRMKY. At 486-487 the chain is on the lumenal side; the sequence is LW. Residues 488–499 traverse the membrane as a helical segment; it reads TSHMCVFASFGL. The Cytoplasmic portion of the chain corresponds to 500 to 522; the sequence is CSPEIWELLLKSVHLYNPKRICI. Residues 523–539 traverse the membrane as a helical segment; that stretch reads MRYSVPILILLYLCYKF. At 540–716 the chain is on the lumenal side; sequence WPGMMDELSE…FHVYKLSRNK (177 aa). An N-linked (GlcNAc...) asparagine glycan is attached at Asn704.

It belongs to the dpy-19 family. In terms of tissue distribution, widely expressed.

It localises to the endoplasmic reticulum membrane. It catalyses the reaction L-tryptophyl-[protein] + a di-trans,poly-cis-dolichyl beta-D-mannosyl phosphate = C-alpha-D-mannosyl-L-tryptophyl-[protein] + a di-trans,poly-cis-dolichyl phosphate + H(+). It participates in protein modification; protein glycosylation. Its function is as follows. C-mannosyltransferase that mediates C-mannosylation of tryptophan residues on target proteins. The reaction occurs on the luminal side of the endoplasmic reticulum and involves the transfer of a mannose unit from a dolichylphosphate mannose (Dol-P-Man) donor to an acceptor protein containing a WxxW or WxxC consensus sequence. C-mannosylates RSPO1, a Wnt signaling regulator, preferentially at the first Trp residue in the sequence WxxW. C-mannosylates the netrin receptor UNC5A, preferentially at the third tryptophan of WxxWxxWxxC sequence. Has no C-mannosyltransferase activity. The chain is Protein C-mannosyl-transferase DPY19L3 (DPY19L3) from Homo sapiens (Human).